The chain runs to 208 residues: Large ribosomal subunit protein uL4 (208 aa).

The tract at residues 45–84 is disordered; sequence RQGTHKVKNRSEVRGGGKKPYRQKGTGHARQGSSRSGLMS. A compositionally biased stretch (basic residues) spans 60-71; it reads GGKKPYRQKGTG.

This sequence belongs to the universal ribosomal protein uL4 family. As to quaternary structure, part of the 50S ribosomal subunit.

Functionally, one of the primary rRNA binding proteins, this protein initially binds near the 5'-end of the 23S rRNA. It is important during the early stages of 50S assembly. It makes multiple contacts with different domains of the 23S rRNA in the assembled 50S subunit and ribosome. Its function is as follows. Forms part of the polypeptide exit tunnel. In Prosthecochloris aestuarii (strain DSM 271 / SK 413), this protein is Large ribosomal subunit protein uL4.